The chain runs to 345 residues: L-threonine 3-dehydrogenase (345 aa).

Cys39 serves as a coordination point for Zn(2+). Catalysis depends on charge relay system residues Thr41 and His44. Zn(2+)-binding residues include His64, Glu65, Cys94, Cys97, Cys100, and Cys108. NAD(+) is bound by residues Ile176, Asp196, Arg201, 263–265 (LGI), and 287–288 (VY).

It belongs to the zinc-containing alcohol dehydrogenase family. In terms of assembly, homotetramer. The cofactor is Zn(2+).

The protein localises to the cytoplasm. It catalyses the reaction L-threonine + NAD(+) = (2S)-2-amino-3-oxobutanoate + NADH + H(+). The protein operates within amino-acid degradation; L-threonine degradation via oxydo-reductase pathway; glycine from L-threonine: step 1/2. Its function is as follows. Catalyzes the NAD(+)-dependent oxidation of L-threonine to 2-amino-3-ketobutyrate. The chain is L-threonine 3-dehydrogenase from Anaeromyxobacter dehalogenans (strain 2CP-1 / ATCC BAA-258).